The chain runs to 67 residues: Bowman-Birk type proteinase inhibitor 1 (67 aa).

7 cysteine pairs are disulfide-bonded: cysteine 5-cysteine 59, cysteine 6-cysteine 21, cysteine 9-cysteine 55, cysteine 11-cysteine 19, cysteine 29-cysteine 36, cysteine 33-cysteine 48, and cysteine 38-cysteine 46.

This sequence belongs to the Bowman-Birk serine protease inhibitor family. In terms of assembly, monomer. Although dimerization may occur in solution. As to expression, seed.

Its function is as follows. Inhibits trypsin but not chymotrypsin. The inhibitor consists of 2 domains and has 2 sites of interaction with trypsin. This is Bowman-Birk type proteinase inhibitor 1 from Dioclea glabra.